A 255-amino-acid polypeptide reads, in one-letter code: Cytochrome c oxidase subunit 2 (255 aa).

The signal sequence occupies residues 1-16; that stretch reads MFNLFPPFGANTAIFN. The Mitochondrial intermembrane portion of the chain corresponds to 17–43; the sequence is DAPQPWQVGFQDGASPTQEGITELHDS. The helical transmembrane segment at 44 to 64 threads the bilayer; it reads IFFYLVIICFGVLWVLSSVIV. Residues 65-80 lie on the Mitochondrial matrix side of the membrane; sequence NFNSNKSQLVYKYANH. A helical transmembrane segment spans residues 81 to 101; sequence GTLIELIWTITPALVLIAIAF. Residues 102-255 are Mitochondrial intermembrane-facing; sequence PSFKLLYLMD…KYLAWIDSQA (154 aa). The Cu cation site is built by His189, Cys224, Glu226, Cys228, His232, and Met235. Glu226 contributes to the Mg(2+) binding site.

The protein belongs to the cytochrome c oxidase subunit 2 family. As to quaternary structure, component of the cytochrome c oxidase (complex IV, CIV), a multisubunit enzyme composed of a catalytic core of 3 subunits and several supernumerary subunits. The complex exists as a monomer or a dimer and forms supercomplexes (SCs) in the inner mitochondrial membrane with ubiquinol-cytochrome c oxidoreductase (cytochrome b-c1 complex, complex III, CIII). It depends on Cu cation as a cofactor.

Its subcellular location is the mitochondrion inner membrane. The enzyme catalyses 4 Fe(II)-[cytochrome c] + O2 + 8 H(+)(in) = 4 Fe(III)-[cytochrome c] + 2 H2O + 4 H(+)(out). Component of the cytochrome c oxidase, the last enzyme in the mitochondrial electron transport chain which drives oxidative phosphorylation. The respiratory chain contains 3 multisubunit complexes succinate dehydrogenase (complex II, CII), ubiquinol-cytochrome c oxidoreductase (cytochrome b-c1 complex, complex III, CIII) and cytochrome c oxidase (complex IV, CIV), that cooperate to transfer electrons derived from NADH and succinate to molecular oxygen, creating an electrochemical gradient over the inner membrane that drives transmembrane transport and the ATP synthase. Cytochrome c oxidase is the component of the respiratory chain that catalyzes the reduction of oxygen to water. Electrons originating from reduced cytochrome c in the intermembrane space (IMS) are transferred via the dinuclear copper A center (CU(A)) of subunit 2 and heme A of subunit 1 to the active site in subunit 1, a binuclear center (BNC) formed by heme A3 and copper B (CU(B)). The BNC reduces molecular oxygen to 2 water molecules using 4 electrons from cytochrome c in the IMS and 4 protons from the mitochondrial matrix. The chain is Cytochrome c oxidase subunit 2 (COX2) from Mycosarcoma maydis (Corn smut fungus).